Reading from the N-terminus, the 925-residue chain is ETO1-like protein 2 (925 aa).

The BTB domain occupies 207–307 (SDISFCVGSE…ECEARLAASV (101 aa)). The TPR 1 repeat unit spans residues 409 to 442 (ALSLHQMGCVLFERKDYKAAQFHFRLASSLGHVY). A coiled-coil region spans residues 509–533 (KYRAVMKFEQKQIKEAFQEIDRLIQ). TPR repeat units follow at residues 538-571 (PECL…EPNY), 664-697 (AERL…QRSF), 738-771 (GQAL…KHIR), 773-803 (RQGL…SCSK), 834-867 (TYPY…RPEL), and 869-900 (TLHL…DPNH).

This sequence belongs to the ETO1 family. Interacts with the C-terminal domain of ACS5. In terms of tissue distribution, constitutively expressed in green and etiolated seedlings.

Its pathway is protein modification; protein ubiquitination. Potential regulator of the ethylene pathway, which acts by regulating the stability of 1-aminocyclopropane-1-carboxylate synthase (ACS) enzymes. May act as a substrate-specific adapter that connects ACS enzymes, such as ACS5, to ubiquitin ligase complexes, leading to proteasomal degradation of ACS enzymes. This chain is ETO1-like protein 2 (EOL2), found in Arabidopsis thaliana (Mouse-ear cress).